The sequence spans 86 residues: Cell division topological specificity factor (86 aa).

This sequence belongs to the MinE family.

Prevents the cell division inhibition by proteins MinC and MinD at internal division sites while permitting inhibition at polar sites. This ensures cell division at the proper site by restricting the formation of a division septum at the midpoint of the long axis of the cell. The polypeptide is Cell division topological specificity factor (Bordetella petrii (strain ATCC BAA-461 / DSM 12804 / CCUG 43448)).